The primary structure comprises 199 residues: Ribonuclease P protein component 3 (199 aa).

This sequence belongs to the eukaryotic/archaeal RNase P protein component 3 family. In terms of assembly, consists of a catalytic RNA component and at least 4-5 protein subunits.

Its subcellular location is the cytoplasm. It catalyses the reaction Endonucleolytic cleavage of RNA, removing 5'-extranucleotides from tRNA precursor.. Part of ribonuclease P, a protein complex that generates mature tRNA molecules by cleaving their 5'-ends. The sequence is that of Ribonuclease P protein component 3 from Archaeoglobus fulgidus (strain ATCC 49558 / DSM 4304 / JCM 9628 / NBRC 100126 / VC-16).